The chain runs to 362 residues: L-asparaginase 2-1 (362 aa).

The first 25 residues, 1-25 (MRSLNTLLLSLFVAMSSGAPLLKIR), serve as a signal peptide directing secretion. A glycan (N-linked (GlcNAc...) asparagine) is linked at Asn29. One can recognise an Asparaginase/glutaminase domain in the interval 33–359 (PSIKIFGTGG…DQIRSVFSGV (327 aa)). Thr43 (O-isoaspartyl threonine intermediate) is an active-site residue. Ser89 serves as a coordination point for substrate. Asn93 carries N-linked (GlcNAc...) asparagine glycosylation. A substrate-binding site is contributed by 122 to 123 (TD). N-linked (GlcNAc...) asparagine glycosylation is present at Asn239.

It belongs to the asparaginase 1 family.

The protein localises to the secreted. It is found in the periplasm. It catalyses the reaction L-asparagine + H2O = L-aspartate + NH4(+). This Saccharomyces cerevisiae (strain ATCC 204508 / S288c) (Baker's yeast) protein is L-asparaginase 2-1 (ASP3-1).